The primary structure comprises 460 residues: Cysteine--tRNA ligase (460 aa).

Cysteine 27 is a binding site for Zn(2+). A 'HIGH' region motif is present at residues 29–39; that stretch reads PTVYDLIHVGN. The Zn(2+) site is built by cysteine 207, histidine 232, and glutamate 236. The 'KMSKS' region signature appears at 264–268; that stretch reads KMSKS. Lysine 267 lines the ATP pocket.

Belongs to the class-I aminoacyl-tRNA synthetase family. As to quaternary structure, monomer. Zn(2+) serves as cofactor.

It is found in the cytoplasm. The enzyme catalyses tRNA(Cys) + L-cysteine + ATP = L-cysteinyl-tRNA(Cys) + AMP + diphosphate. This chain is Cysteine--tRNA ligase (cysS), found in Thermotoga maritima (strain ATCC 43589 / DSM 3109 / JCM 10099 / NBRC 100826 / MSB8).